A 227-amino-acid chain; its full sequence is UPF0173 metal-dependent hydrolase BCQ_4418 (227 aa).

This sequence belongs to the UPF0173 family.

The sequence is that of UPF0173 metal-dependent hydrolase BCQ_4418 from Bacillus cereus (strain Q1).